The primary structure comprises 688 residues: Elongation factor G (688 aa).

In terms of domain architecture, tr-type G spans 8-282; the sequence is DKFRNFGIMA…GVVDYLPSPL (275 aa). Residues 17–24, 81–85, and 135–138 each bind GTP; these read AHIDAGKT, DTPGH, and NKMD.

The protein belongs to the TRAFAC class translation factor GTPase superfamily. Classic translation factor GTPase family. EF-G/EF-2 subfamily.

The protein localises to the cytoplasm. Its function is as follows. Catalyzes the GTP-dependent ribosomal translocation step during translation elongation. During this step, the ribosome changes from the pre-translocational (PRE) to the post-translocational (POST) state as the newly formed A-site-bound peptidyl-tRNA and P-site-bound deacylated tRNA move to the P and E sites, respectively. Catalyzes the coordinated movement of the two tRNA molecules, the mRNA and conformational changes in the ribosome. This chain is Elongation factor G, found in Clostridium botulinum (strain Alaska E43 / Type E3).